A 429-amino-acid polypeptide reads, in one-letter code: 5-methylthioadenosine/S-adenosylhomocysteine deaminase (429 aa).

The Zn(2+) site is built by His-66 and His-68. Residues Glu-95, Arg-147, Arg-158, and His-181 each coordinate substrate. A Zn(2+)-binding site is contributed by His-208. Substrate contacts are provided by Glu-211 and Asp-296. Asp-296 lines the Zn(2+) pocket.

It belongs to the metallo-dependent hydrolases superfamily. MTA/SAH deaminase family. It depends on Zn(2+) as a cofactor.

It catalyses the reaction S-adenosyl-L-homocysteine + H2O + H(+) = S-inosyl-L-homocysteine + NH4(+). The catalysed reaction is S-methyl-5'-thioadenosine + H2O + H(+) = S-methyl-5'-thioinosine + NH4(+). Functionally, catalyzes the deamination of 5-methylthioadenosine and S-adenosyl-L-homocysteine into 5-methylthioinosine and S-inosyl-L-homocysteine, respectively. Is also able to deaminate adenosine. This chain is 5-methylthioadenosine/S-adenosylhomocysteine deaminase, found in Caldicellulosiruptor saccharolyticus (strain ATCC 43494 / DSM 8903 / Tp8T 6331).